The sequence spans 442 residues: Circumsporozoite protein (442 aa).

Residues 1 to 18 form the signal peptide; it reads MMRKLAILSVSSFLFVEA. A disordered region spans residues 69 to 357; that stretch reads SRSLGENDDG…VKNNNNEEPS (289 aa). Residues 81–94 are compositionally biased toward low complexity; the sequence is DNGNNNNGNNNNGD. Residues 95–115 are compositionally biased toward basic and acidic residues; it reads NGREGKDEDKRDGNNEDNEKL. Residues 114–121 form a required for the binding to heparan sulfate proteoglycans (HSPGs) on the surface of host hepatocytes region; that stretch reads KLRKPKHK. Residues 122–126 form a region I; contains the proteolytic cleavage site region; it reads KLKQP. The segment covering 130-318 has biased composition (low complexity); that stretch reads NPDPNANPNV…PNANPNANPN (189 aa). 46 repeat units span residues 134-137, 138-141, 142-145, 146-149, 150-153, 154-157, 158-161, 162-165, 166-169, 170-173, 174-177, 178-181, 182-185, 186-189, 190-193, 194-197, 198-201, 202-205, 206-209, 210-213, 214-217, 218-221, 222-225, 226-229, 230-233, 234-237, 238-241, 242-245, 246-249, 250-253, 254-257, 258-261, 262-265, 266-269, 270-273, 274-277, 278-281, 282-285, 286-289, 290-293, 294-297, 298-301, 302-305, 306-309, 310-313, and 314-317. A 46 X 4 AA tandem repeats of N-[AV]-[ND]-P region spans residues 134 to 317; it reads NANPNVDPNA…NPNANPNANP (184 aa). Positions 319–334 are enriched in polar residues; it reads KNNQGNGQGHNMPNDP. The segment covering 340–354 has biased composition (low complexity); that stretch reads ENANANNAVKNNNNE. Positions 367 to 420 constitute a TSP type-1 domain; the sequence is KIQNSLSTEWSPCSVTCGNGIQVRIKPGSADKPKDQLDYENDIEKKICKMEKCS. Cystine bridges form between C379–C414 and C383–C419. An O-linked (Fuc) threonine glycan is attached at T382. C419 carries the GPI-anchor amidated cysteine lipid modification. A propeptide spans 420–442 (removed in mature form); it reads SSVFNVVNSSIGLIMVLSFLFLN.

Belongs to the plasmodium circumsporozoite protein family. Post-translationally, during host cell invasion, proteolytically cleaved at the cell membrane in the region I by a papain-like cysteine protease of parasite origin. Cleavage is triggered by the sporozoite contact with highly sulfated heparan sulfate proteoglycans (HSPGs) present on the host hepatocyte cell surface. Cleavage exposes the TSP type-1 (TSR) domain and is required for productive invasion of host hepatocytes but not for adhesion to the host cell membrane. Cleavage is dispensable for sporozoite development in the oocyst, motility and for traversal of host and vector cells. O-glycosylated; maybe by POFUT2.

Its subcellular location is the cell membrane. It is found in the cytoplasm. Functionally, essential sporozoite protein. In the mosquito vector, required for sporozoite development in the oocyst, migration through the vector hemolymph and entry into the vector salivary glands. In the vertebrate host, required for sporozoite migration through the host dermis and infection of host hepatocytes. Binds to highly sulfated heparan sulfate proteoglycans (HSPGs) on the surface of host hepatocytes. In terms of biological role, in the vertebrate host, binds to highly sulfated heparan sulfate proteoglycans (HSPGs) on the surface of host hepatocytes and is required for sporozoite invasion of the host hepatocytes. In Plasmodium falciparum (isolate Wellcome), this protein is Circumsporozoite protein.